The sequence spans 378 residues: Chaperone protein DnaJ (378 aa).

The 65-residue stretch at 5 to 69 (EYYDRLGVSK…QKRAAYDQYG (65 aa)) folds into the J domain. The CR-type zinc-finger motif lies at 134–216 (GVEKEVSYNR…CHGTGHEKQA (83 aa)). Residues Cys-147, Cys-150, Cys-164, Cys-167, Cys-190, Cys-193, Cys-204, and Cys-207 each coordinate Zn(2+). CXXCXGXG motif repeat units follow at residues 147-154 (CGTCLGSG), 164-171 (CRKCHGSG), 190-197 (CDICHGSG), and 204-211 (CQTCHGTG).

Belongs to the DnaJ family. As to quaternary structure, homodimer. Zn(2+) is required as a cofactor.

It is found in the cytoplasm. Functionally, participates actively in the response to hyperosmotic and heat shock by preventing the aggregation of stress-denatured proteins and by disaggregating proteins, also in an autonomous, DnaK-independent fashion. Unfolded proteins bind initially to DnaJ; upon interaction with the DnaJ-bound protein, DnaK hydrolyzes its bound ATP, resulting in the formation of a stable complex. GrpE releases ADP from DnaK; ATP binding to DnaK triggers the release of the substrate protein, thus completing the reaction cycle. Several rounds of ATP-dependent interactions between DnaJ, DnaK and GrpE are required for fully efficient folding. Also involved, together with DnaK and GrpE, in the DNA replication of plasmids through activation of initiation proteins. This Streptococcus pyogenes serotype M1 protein is Chaperone protein DnaJ.